Reading from the N-terminus, the 174-residue chain is VAAAQALREIERLACWSVKQANLTTSLLGDLLDDVTSIRHAVLQNRAAIDFLLLAHGHGCEDIAGMCCFNLSDHSESIQKKFQLMKEHVNKIGVDSDPIGSWLRGLFGGIGEWAVHLLKGLLLGLVVILLLVVCLPCLLQFVSSSIRKMIDNSLGYREERKKFQEAYKQPERVV.

Residues 1-121 (VAAAQALREI…EWAVHLLKGL (121 aa)) lie on the Extracellular side of the membrane. A coiled-coil region spans residues 4-54 (AQALREIERLACWSVKQANLTTSLLGDLLDDVTSIRHAVLQNRAAIDFLLL). A disulfide bridge links Cys-60 with Cys-67. The stretch at 72 to 102 (SDHSESIQKKFQLMKEHVNKIGVDSDPIGSW) forms a coiled coil. The chain crosses the membrane as a helical span at residues 122–142 (LLGLVVILLLVVCLPCLLQFV). S-palmitoyl cysteine; by host attachment occurs at residues Cys-134 and Cys-137. The Cytoplasmic portion of the chain corresponds to 143-174 (SSSIRKMIDNSLGYREERKKFQEAYKQPERVV).

Belongs to the Alpharetroviruses envelope glycoprotein family. As to quaternary structure, heterodimer with the surface protein. The mature envelope protein (Env) consists of a trimer of SU-TM heterodimers attached by a labile interchain disulfide bond. Specific enzymatic cleavages in vivo yield mature proteins. Envelope glycoproteins are synthesized as an inactive precursor that is N-glycosylated and processed likely by host cell furin or by a furin-like protease in the Golgi to yield the mature SU and TM proteins. The cleavage site between SU and TM requires the minimal sequence [KR]-X-[KR]-R. In terms of processing, the transmembrane protein is palmitoylated. Palmitoylation is necessary for glycoprotein function and infectivity.

The protein resides in the virion membrane. Its subcellular location is the host cell membrane. Functionally, the transmembrane protein (TM) acts as a class I viral fusion protein. Under the current model, the protein has at least 3 conformational states: pre-fusion native state, pre-hairpin intermediate state, and post-fusion hairpin state. During viral and target cell membrane fusion, the coiled coil regions (heptad repeats) assume a trimer-of-hairpins structure, positioning the fusion peptide in close proximity to the C-terminal region of the ectodomain. The formation of this structure appears to drive apposition and subsequent fusion of viral and target cell membranes. Membranes fusion leads to delivery of the nucleocapsid into the cytoplasm. This is Envelope glycoprotein (env) from UR2 avian sarcoma virus (UR2SV).